Consider the following 127-residue polypeptide: KDIPRCELVKILRRHGFEGFVGKTVANWVCLVKHESGYRTTAFNNNGPNSRDYGIFQINSKYWCNDGKTRGSKNACNINCSKLRDDNIADDIQCAKKIAREARGLTPWVAWKKYCQGKDLSSYVRGC.

The 127-residue stretch at 1 to 127 (KDIPRCELVK…KDLSSYVRGC (127 aa)) folds into the C-type lysozyme domain. 4 cysteine pairs are disulfide-bonded: C6–C127, C30–C115, C64–C80, and C76–C94. Residues E35 and D52 contribute to the active site. The Ca(2+) site is built by K82, D85, N87, D90, and D91.

The protein belongs to the glycosyl hydrolase 22 family. Monomer. Ca(2+) is required as a cofactor.

The protein resides in the secreted. It carries out the reaction Hydrolysis of (1-&gt;4)-beta-linkages between N-acetylmuramic acid and N-acetyl-D-glucosamine residues in a peptidoglycan and between N-acetyl-D-glucosamine residues in chitodextrins.. Lysozymes have primarily a bacteriolytic function; those in tissues and body fluids are associated with the monocyte-macrophage system and enhance the activity of immunoagents. This chain is Lysozyme C (LYZ), found in Columba livia (Rock dove).